Reading from the N-terminus, the 116-residue chain is Beta-D-galactosidase Rv1717 (116 aa).

The Cupin type-2 domain maps to 40–107 (LSVYRPGGTA…TDRQALLLVT (68 aa)).

Its subcellular location is the secreted. It localises to the cell wall. The catalysed reaction is Hydrolysis of terminal non-reducing beta-D-galactose residues in beta-D-galactosides.. Beta-galactosidase activity is activated by Mg(2+) and significantly inhibited by Ca(2+), Cd(2+), Fe(2+), Ni(2+), Cu(2+) and Zn(2+). Inhibited by EDTA. In terms of biological role, beta-D-galactopyranosidase that specifically recognizes the beta-glycosidic bonds formed with beta-D-galactopyranose (beta-D-Gal) or N-acetylgalactosamine (beta-D-GalNAc). May target the galactoside linkages in the exopolysaccharide component of the mycobacterial extracellular polymeric substance (EPS) and help dispersal of Mtb bacteria from a deteriorating biofilm. In Mycobacterium tuberculosis (strain ATCC 25618 / H37Rv), this protein is Beta-D-galactosidase Rv1717.